The chain runs to 583 residues: ATP-dependent lipid A-core flippase (583 aa).

A run of 5 helical transmembrane segments spans residues 27–47, 69–89, 142–162, 165–185, and 249–269; these read LAVA…MVSL, LLVF…TYCL, ALVS…LMFY, WQLS…IGFV, and AAAN…VLYL. Positions 28–310 constitute an ABC transmembrane type-1 domain; the sequence is AVAVVALIIN…LTNVTSQFQR (283 aa). In terms of domain architecture, ABC transporter spans 342–578; sequence VNVKDISFTY…DGAYAQLHRI (237 aa). 376–383 is an ATP binding site; sequence GRSGSGKS.

It belongs to the ABC transporter superfamily. Lipid exporter (TC 3.A.1.106) family. In terms of assembly, homodimer.

Its subcellular location is the cell inner membrane. The enzyme catalyses ATP + H2O + lipid A-core oligosaccharideSide 1 = ADP + phosphate + lipid A-core oligosaccharideSide 2.. Functionally, involved in lipopolysaccharide (LPS) biosynthesis. Translocates lipid A-core from the inner to the outer leaflet of the inner membrane. Transmembrane domains (TMD) form a pore in the inner membrane and the ATP-binding domain (NBD) is responsible for energy generation. The polypeptide is ATP-dependent lipid A-core flippase (Vibrio vulnificus (strain CMCP6)).